Reading from the N-terminus, the 88-residue chain is Small ribosomal subunit protein uS15 (88 aa).

The protein belongs to the universal ribosomal protein uS15 family. In terms of assembly, part of the 30S ribosomal subunit. Forms a bridge to the 50S subunit in the 70S ribosome, contacting the 23S rRNA.

One of the primary rRNA binding proteins, it binds directly to 16S rRNA where it helps nucleate assembly of the platform of the 30S subunit by binding and bridging several RNA helices of the 16S rRNA. Functionally, forms an intersubunit bridge (bridge B4) with the 23S rRNA of the 50S subunit in the ribosome. In Halothermothrix orenii (strain H 168 / OCM 544 / DSM 9562), this protein is Small ribosomal subunit protein uS15.